The primary structure comprises 572 residues: Mitochondrial distribution and morphology protein 34 (572 aa).

The SMP-LTD domain occupies 1–195 (MAFNFNWSPL…LPAIIHRLSL (195 aa)). Disordered regions lie at residues 212-236 (TASA…VDAL), 355-426 (GAGR…PDND), 487-507 (HGAS…GSSR), and 552-572 (ACGP…AYGH). The span at 358–370 (RHSKAHARKRKKR) shows a compositional bias: basic residues. Residues 371–381 (VVDLRRPKTTD) are compositionally biased toward basic and acidic residues. Polar residues predominate over residues 387–400 (SDESSFTESTSAPS).

Belongs to the MDM34 family. In terms of assembly, component of the ER-mitochondria encounter structure (ERMES) or MDM complex, composed of mmm1, mdm10, mdm12 and mdm34.

It is found in the mitochondrion outer membrane. Functionally, component of the ERMES/MDM complex, which serves as a molecular tether to connect the endoplasmic reticulum (ER) and mitochondria. Components of this complex are involved in the control of mitochondrial shape and protein biogenesis, and function in nonvesicular lipid trafficking between the ER and mitochondria. Mdm34 is required for the interaction of the ER-resident membrane protein mmm1 and the outer mitochondrial membrane-resident beta-barrel protein mdm10. The polypeptide is Mitochondrial distribution and morphology protein 34 (Aspergillus fumigatus (strain ATCC MYA-4609 / CBS 101355 / FGSC A1100 / Af293) (Neosartorya fumigata)).